A 1944-amino-acid chain; its full sequence is Anaphase-promoting complex subunit 1 (1944 aa).

Phosphoserine occurs at positions 51, 60, 202, and 286. Threonine 291 is modified (phosphothreonine). The interval 305–343 is disordered; sequence LRSLSKGDSPVTSPFQNYSSIHSQSRSTSSPSLHSRSPS. 7 positions are modified to phosphoserine: serine 313, serine 341, serine 343, serine 355, serine 362, serine 373, and serine 377. Residues 323–343 are compositionally biased toward low complexity; that stretch reads SSIHSQSRSTSSPSLHSRSPS. Residues 373 to 396 are disordered; it reads SHNQSPKRHSISHSPNSNSNGSFL. Residues 384–394 are compositionally biased toward low complexity; the sequence is SHSPNSNSNGS. At threonine 537 the chain carries Phosphothreonine. 2 positions are modified to phosphoserine: serine 547 and serine 555. Phosphotyrosine is present on tyrosine 571. Phosphoserine is present on residues serine 686, serine 688, and serine 916. Residues 994 to 1016 form a disordered region; sequence KGKSVLSSDVPSGTETEEEDDGM. The segment covering 998–1007 has biased composition (polar residues); it reads VLSSDVPSGT. PC repeat units lie at residues 1297-1325, 1366-1404, 1467-1501, and 1520-1552; these read AAGLALGMVCLGHGSNLIGMSDLNVPEQL, GATLALAMIYLKTNNRSIADWLRAPDTMYLLDFVKPEFL, GACLSLGFRFAGSENLSAFNCLHKFAKDFMTYLSA, and LLSLAMVMAGSGNLKVLQLCRFLHMKTGGEMNY.

The protein belongs to the APC1 family. The mammalian APC/C is composed at least of 14 distinct subunits ANAPC1, ANAPC2, CDC27/APC3, ANAPC4, ANAPC5, CDC16/APC6, ANAPC7, CDC23/APC8, ANAPC10, ANAPC11, CDC26/APC12, ANAPC13, ANAPC15 and ANAPC16 that assemble into a complex of at least 19 chains with a combined molecular mass of around 1.2 MDa; APC/C interacts with FZR1 and FBXO5. In terms of processing, phosphorylated. Phosphorylation on Ser-355 occurs specifically during mitosis.

The protein operates within protein modification; protein ubiquitination. Functionally, component of the anaphase promoting complex/cyclosome (APC/C), a cell cycle-regulated E3 ubiquitin ligase that controls progression through mitosis and the G1 phase of the cell cycle. The APC/C complex acts by mediating ubiquitination and subsequent degradation of target proteins: it mainly mediates the formation of 'Lys-11'-linked polyubiquitin chains and, to a lower extent, the formation of 'Lys-48'- and 'Lys-63'-linked polyubiquitin chains. The APC/C complex catalyzes assembly of branched 'Lys-11'-/'Lys-48'-linked branched ubiquitin chains on target proteins. The protein is Anaphase-promoting complex subunit 1 (ANAPC1) of Homo sapiens (Human).